A 246-amino-acid chain; its full sequence is Probable maleylacetoacetate isomerase 1 (246 aa).

One can recognise a GST N-terminal domain in the interval 32-116 (TKPILYSYWP…YLEETRPQPA (85 aa)). Glutathione contacts are provided by residues 42–47 (SSCSWR), valine 88, 100–101 (DS), glutamine 140, and 144–146 (NVS). The GST C-terminal domain maps to 121–241 (DPVKRAKIRE…HPSTQPDCPP (121 aa)).

It belongs to the GST superfamily. Zeta family. Requires glutathione as cofactor.

It is found in the cytoplasm. It carries out the reaction 4-maleylacetoacetate = 4-fumarylacetoacetate. The catalysed reaction is RX + glutathione = an S-substituted glutathione + a halide anion + H(+). It participates in amino-acid degradation; L-phenylalanine degradation; acetoacetate and fumarate from L-phenylalanine: step 5/6. In terms of biological role, catalyzes the glutathione dependent oxygenation of dichloroacetic acid to glyoxylic acid in vitro. Possesses low glutathione thioltransferase activity toward 4-hydroxynonenal (4-HNE). Has no glutathione thioltransferase activity with adrenochrome, phenethyl isothiocyanate (PEITC), 5-hydroperoxyeicosatetraenoic acid ((5S)-HpETE), prostaglandin A2 (PGA2) or 2-hydroxyethyldisulfide (HED). The sequence is that of Probable maleylacetoacetate isomerase 1 (GstZ1) from Drosophila melanogaster (Fruit fly).